Here is a 369-residue protein sequence, read N- to C-terminus: Glutamate 5-kinase (369 aa).

Residue Lys9 coordinates ATP. Substrate-binding residues include Ser49, Asp136, and Asn148. ATP is bound by residues 168–169 and 210–216; these read TD and TGGMLTK. The PUA domain maps to 275–355; that stretch reads QGSIWVDKGA…KGVLIYRDDW (81 aa).

It belongs to the glutamate 5-kinase family.

It is found in the cytoplasm. The catalysed reaction is L-glutamate + ATP = L-glutamyl 5-phosphate + ADP. Its pathway is amino-acid biosynthesis; L-proline biosynthesis; L-glutamate 5-semialdehyde from L-glutamate: step 1/2. Catalyzes the transfer of a phosphate group to glutamate to form L-glutamate 5-phosphate. This Streptococcus pneumoniae serotype 2 (strain D39 / NCTC 7466) protein is Glutamate 5-kinase.